Here is a 260-residue protein sequence, read N- to C-terminus: Methylesterase 7 (260 aa).

Catalysis depends on serine 84, which acts as the Acyl-ester intermediate. Residues aspartate 210 and histidine 238 each act as charge relay system in the active site.

Belongs to the AB hydrolase superfamily. Methylesterase family.

It catalyses the reaction methyl (indol-3-yl)acetate + H2O = (indol-3-yl)acetate + methanol + H(+). It carries out the reaction methyl salicylate + H2O = salicylate + methanol + H(+). It participates in plant hormone biosynthesis. With respect to regulation, esterase activity is down-regulated by salicylic acid (SA). Functionally, methylesterase shown to have carboxylesterase activity, methyl indole-3-acetic acid (MeIAA) esterase activity and methyl salicylate (MeSA) esterase activity in vitro. Required to convert methyl salicylate (MeSA) to salicylic acid (SA) as part of the signal transduction pathways that activate systemic acquired resistance in systemic tissue. MeSA is believed to be an inactive form that needs to be demethylated to exert a biological effect. The protein is Methylesterase 7 of Arabidopsis thaliana (Mouse-ear cress).